The chain runs to 428 residues: Histidinol dehydrogenase (428 aa).

Residues Tyr-126, Gln-188, and Asn-211 each contribute to the NAD(+) site. Residues Ser-234, Gln-256, and His-259 each contribute to the substrate site. Positions 256 and 259 each coordinate Zn(2+). Residues Glu-324 and His-325 each act as proton acceptor in the active site. Substrate contacts are provided by His-325, Asp-358, Glu-412, and His-417. Asp-358 lines the Zn(2+) pocket. His-417 contacts Zn(2+).

The protein belongs to the histidinol dehydrogenase family. The cofactor is Zn(2+).

The catalysed reaction is L-histidinol + 2 NAD(+) + H2O = L-histidine + 2 NADH + 3 H(+). The protein operates within amino-acid biosynthesis; L-histidine biosynthesis; L-histidine from 5-phospho-alpha-D-ribose 1-diphosphate: step 9/9. Functionally, catalyzes the sequential NAD-dependent oxidations of L-histidinol to L-histidinaldehyde and then to L-histidine. This is Histidinol dehydrogenase from Chlorobium chlorochromatii (strain CaD3).